The chain runs to 468 residues: 3-isopropylmalate dehydratase large subunit (468 aa).

Residues cysteine 349, cysteine 409, and cysteine 412 each coordinate [4Fe-4S] cluster.

Belongs to the aconitase/IPM isomerase family. LeuC type 1 subfamily. As to quaternary structure, heterodimer of LeuC and LeuD. The cofactor is [4Fe-4S] cluster.

It catalyses the reaction (2R,3S)-3-isopropylmalate = (2S)-2-isopropylmalate. It participates in amino-acid biosynthesis; L-leucine biosynthesis; L-leucine from 3-methyl-2-oxobutanoate: step 2/4. Its function is as follows. Catalyzes the isomerization between 2-isopropylmalate and 3-isopropylmalate, via the formation of 2-isopropylmaleate. The protein is 3-isopropylmalate dehydratase large subunit of Jannaschia sp. (strain CCS1).